The chain runs to 1126 residues: Formin-B (1126 aa).

Residues 1–21 (MFFKGKKKDKEKEKSHGNIGN) are disordered. A GBD/FH3 domain is found at 38-406 (EQNLSNEDLK…LILKDPSKES (369 aa)). The segment covering 427–447 (LNNSNNNNNNNNSNNNNNDSN) has biased composition (low complexity). Residues 427-462 (LNNSNNNNNNNNSNNNNNDSNVSTPNINTGSPLLPP) form a disordered region. Residues 448 to 462 (VSTPNINTGSPLLPP) show a composition bias toward polar residues. Residues 463-514 (QQYQDLEQKLQLTQNEKNESQNKVKQLESEIKGLNSTLTGLQLKVTKLEADL) are a coiled coil. Polar residues predominate over residues 518–532 (SVTTPPSDTNGTTSP). Disordered regions lie at residues 518–619 (SVTT…SVPS) and 1004–1078 (ARKK…QNGT). The region spanning 527 to 611 (NGTTSPPIEA…PGAPAVPNLP (85 aa)) is the FH1 domain. Over residues 543–597 (GAPPPPPPPPPAPPVSGGGPPPPPPPPPPSSGGGPPPPPPPPSSGGPPPPPPPPG) the composition is skewed to pro residues. 3 stretches are compositionally biased toward low complexity: residues 598 to 607 (GMKKPGAPAV), 1009 to 1022 (AASGPSVPSASGSS), and 1032 to 1064 (SPITPTSKSSISISQKPPQSTQPSISVQQQQQQ). One can recognise an FH2 domain in the interval 612–1011 (PKKSSVPSVK…LAARKKAAAS (400 aa)). The stretch at 980–1010 (KFKNEFKRTIESIQKERENVQKLAARKKAAA) forms a coiled coil. The DAD domain occupies 1071 to 1100 (DDIPQNGTFMDQLMSKMKGGEAIRASRRAS).

The protein belongs to the formin homology family. Diaphanous subfamily. In terms of assembly, interacts (via GBD/FH3 domain) with activated Rho-GTPases. Interacts with pfyA and pfyB.

Formins play an important role in the nucleation of actin and the formation of linear actin filaments. This chain is Formin-B (forB), found in Dictyostelium discoideum (Social amoeba).